The chain runs to 1495 residues: MEANKNTYSRLGDTIETVERIEFCINSNESIIRHSAIVDPNGITEAETFNSNNNEPVQGGVIDKRLGVTESHLECSTCGETALRCPGHFGHIKFVEPVFHMGYLIYLKHILSCICIRCNKLLVYKNEKEIAALIKNKQGKQRFAEIRSICKKVTHCQKENYGCGTPAHKISIDKRNGNIFLLAEPVKRTDEYDETGETRKRPQQILTPQLCYDILKSVSDEDCIIMGFDPAKSRPEDMIILNFPVPPVQVRPSIRAEILSSPTMDDDLTHKLIDIIKSNENLKNTKGDGSLIKYTSINDDFMLLQLHVATFFANDMAGLARSQQKNKKVTKSMSERLRGKEGRIRGNLMGKRVDMSARTVITSDPNIALNEVGVPLIIAKNLTFDEIVTEHNIEYLTQLVKNGKRVYPGANFVIKHVIDAEGNESGHIYHLKYVDKPISLKPGDIVKRQLIDGDIVIFNRQPSLHKLSMMGHKCHVIPDNNLLTFRVNVSVTDPYNADFDGDEMNLHVPQSIQTATEILLIANASRRFVSPATSNIAIKAKQDTLMGSYVQTEPDMEIDWRDAMSILMSTSVKLDNDIPKYQNVSGKFLYSQIIPEGLNITKRKNDKEFQLKIKNGELTDGTLGKSEISSILQRIWFQYGSKETQEFIDDAQRMILQFLMRYGYTVSIKDTVIGEKVNQYIYDLIETKRKETLAFITEYDNDPYVMTKDAFEIKLQENLKSVQDEIKNTVMRNFDKNSGIFIAISSGSSGEPMNAGQIAGCIGQVIVEGKRIQIRFNGRTLPMFPKFDDSAFSRGFCRNSFIEGLGPFEFFFQVMAGREGIINTAIKTADTGYIQRKLVKMLEDIKQEYDGTVRNANGKLISCVYGDNGINTENQVDQKIDLISANDNKVRNDYVYTEDEIKYLIKNHKTDKRYTTDLNNSLYRKLISMRDQLRRIQRLVNLTSAEFKETYKMPVDIQQFIFNIINRDVRNNNVVVDPYYVLKMIKDMYYGSDSKIMKYNNRTSRIKKEDEKRIKFLMKIYLYDVLAPKKCTHVYKFSKQEFDEIVDYFKKTIMLAKVEGGEMVGFVAAQSIGEPVTQTNLKSFHKSGTGKTVSGGLVRVKELLGISKNIKTPITEIILEEKYKNDKITASRIASYLKYTTLRDVVEKADVIYDPEPFSKDGLMKKDGVDNIFDQEQGKTGCQTDIKNLPWVLRIMLSKEKMIERNINMLEIKTSFCRNWGTRNEDKTSKKEFNKVIDKITQCAIVTNYDNSQVPIVHVRFDANNYNLNTLIQFQEMVINTYKIKGISNITESNNIIEESYVDFDDEGNVVKKKQYVIIAEGINLSEMSQINGIDLLRTKCNDIVTIYEMYGVEAARTAFIKEFTAAIESSGGFSNYQHIEILADAITHMGGLIPVNRHGANKLDTDPFSRASFEKTVEQLLAAAVFGESDHMRSVSARIMVGALINGGTGCFDLLLDHKKIQQSLVESEEVVAPVVPIKKKTVLDDLISKKKSK.

The protein belongs to the RNA polymerase beta' chain family.

It is found in the virion. The catalysed reaction is RNA(n) + a ribonucleoside 5'-triphosphate = RNA(n+1) + diphosphate. Its function is as follows. DNA-dependent RNA polymerase catalyzes the transcription of DNA into RNA using the four ribonucleoside triphosphates as substrates. This chain is DNA-directed RNA polymerase subunit 1 (RPO1), found in Acanthamoeba polyphaga (Amoeba).